Reading from the N-terminus, the 103-residue chain is Sperm-associated antigen 11A (103 aa).

The first 24 residues, 1–24, serve as a signal peptide directing secretion; the sequence is MRQRLLPSVTSLLLVALLFPGSSQ. The N-linked (GlcNAc...) asparagine glycan is linked to N29.

This sequence belongs to the SPAG11 family.

The protein localises to the secreted. Has antimicrobial activity against E.coli. Plays a role in the defense response in the male reproductive tract, contributing to sperm maturation, storage and protection. In Pan troglodytes (Chimpanzee), this protein is Sperm-associated antigen 11A.